We begin with the raw amino-acid sequence, 181 residues long: Insulin-like growth factor 2 (181 aa).

Positions 1 to 24 (MGIPMRKPLLVLLVFLALASCCYA) are cleaved as a signal peptide. The segment at 25-52 (AYRPSETLCGGELVDTLQFVCGDRGFYF) is b. 3 cysteine pairs are disulfide-bonded: cysteine 33-cysteine 71, cysteine 45-cysteine 84, and cysteine 70-cysteine 75. The c stretch occupies residues 53–64 (SRPASRVNRRSR). An a region spans residues 65–85 (GIVEECCFRSCDLALLETYCA). The interval 86–91 (TPAKSE) is d. Positions 92–181 (RDVSTPPTVL…ASPEASGHRK (90 aa)) are cleaved as a propeptide — e peptide. The segment at 151–181 (EAKRHRPLTARPTRDPAAHGGASPEASGHRK) is disordered. Threonine 163 is a glycosylation site (O-linked (GalNAc...) threonine).

Belongs to the insulin family. In terms of assembly, interacts with MYORG; this interaction is required for IGF2 secretion. Interacts with integrins ITGAV:ITGB3 and ITGA6:ITGB4; integrin-binding is required for IGF2 signaling. Interacts with IGFBP2. In terms of processing, proteolytically processed by PCSK4, proIGF2 is cleaved at Arg-128 and Arg-92 to generate big-IGF2 and mature IGF2.

It is found in the secreted. Functionally, the insulin-like growth factors possess growth-promoting activity. Major fetal growth hormone in mammals. Plays a key role in regulating fetoplacental development. IGF2 is influenced by placental lactogen. Also involved in tissue differentiation. In adults, involved in glucose metabolism in adipose tissue, skeletal muscle and liver. Acts as a ligand for integrin which is required for IGF2 signaling. Positively regulates myogenic transcription factor MYOD1 function by facilitating the recruitment of transcriptional coactivators, thereby controlling muscle terminal differentiation. Inhibits myoblast differentiation and modulates metabolism via increasing the mitochondrial respiration rate. In terms of biological role, preptin undergoes glucose-mediated co-secretion with insulin, and acts as a physiological amplifier of glucose-mediated insulin secretion. Exhibits osteogenic properties by increasing osteoblast mitogenic activity through phosphoactivation of MAPK1 and MAPK3. In Sus scrofa (Pig), this protein is Insulin-like growth factor 2.